A 187-amino-acid chain; its full sequence is Transmembrane protein 11-A, mitochondrial (187 aa).

2 helical membrane-spanning segments follow: residues 79 to 95 (TAVLSGTACLLTPLALP) and 102 to 119 (VSLPAGVLSLACSTLYGI).

Belongs to the TMEM11 family.

The protein localises to the mitochondrion inner membrane. In terms of biological role, plays a role in mitochondrial morphogenesis. The protein is Transmembrane protein 11-A, mitochondrial (tmem11-a) of Xenopus laevis (African clawed frog).